The sequence spans 501 residues: ADP,ATP carrier protein 3 (501 aa).

The next 12 membrane-spanning stretches (helical) occupy residues 23 to 43, 59 to 79, 90 to 110, 146 to 166, 183 to 203, 227 to 247, 293 to 313, 326 to 346, 361 to 381, 383 to 403, 446 to 466, and 470 to 490; these read LKLF…FGAL, IISF…TVLY, YIFY…AYII, YALM…LMFW, PVLG…LVFF, IILQ…MFLF, IALL…PWKA, VNFM…FMII, LLTP…IIFI, EIGT…VGAI, FGKS…PTAT, and IIIY…WNII.

The protein belongs to the ADP/ATP translocase tlc family.

It localises to the cell membrane. Functionally, provides the rickettsial cell with host ATP in exchange for rickettsial ADP. This is an obligate exchange system. This energy acquiring activity is an important component of rickettsial parasitism. This Rickettsia typhi (strain ATCC VR-144 / Wilmington) protein is ADP,ATP carrier protein 3 (tlcC).